The sequence spans 201 residues: Syndecan-2 (201 aa).

Positions 1–18 (MRRAWILLTLGLVACVSA) are cleaved as a signal peptide. Residues 19-144 (ESRAELTSDK…HSDSLFKRTE (126 aa)) are Extracellular-facing. Residues Ser41, Ser55, and Ser57 are each glycosylated (O-linked (Xyl...) (glycosaminoglycan) serine). 2 disordered regions span residues 42-70 (GVYPIDDDDYASASGSGADEDVESPELTT) and 90-130 (TLNI…DTNV). Residues 90-102 (TLNIQNKIPAQTK) show a composition bias toward polar residues. Thr101 carries O-linked (GalNAc...) threonine glycosylation. Residues 103–123 (SPEETDKEKVHLSDSERKMDP) show a composition bias toward basic and acidic residues. The residue at position 115 (Ser115) is a Phosphoserine; by FAM20C. The chain crosses the membrane as a helical span at residues 145–169 (VLAAVIAGGVIGFLFAIFLILLLVY). Over 170–201 (RMRKKDEGSYDLGERKPSSAAYQKAPTKEFYA) the chain is Cytoplasmic. A disordered region spans residues 178-201 (SYDLGERKPSSAAYQKAPTKEFYA). Ser187 carries the post-translational modification Phosphoserine.

This sequence belongs to the syndecan proteoglycan family. Interacts (via cytoplasmic domain) with SARM1. Forms a complex with SDCBP and PDCD6IP. In terms of processing, O-glycosylated with core 1 or possibly core 8 glycans. Contains heparan sulfate. Also contains chondroitin sulfate.

The protein localises to the membrane. Functionally, cell surface proteoglycan which regulates dendritic arbor morphogenesis. In Homo sapiens (Human), this protein is Syndecan-2 (SDC2).